The chain runs to 419 residues: UDP-N-acetylglucosamine 1-carboxyvinyltransferase (419 aa).

Phosphoenolpyruvate is bound at residue 22-23 (KN). R93 contacts UDP-N-acetyl-alpha-D-glucosamine. The active-site Proton donor is the C117. C117 is modified (2-(S-cysteinyl)pyruvic acid O-phosphothioketal). UDP-N-acetyl-alpha-D-glucosamine-binding residues include D307 and I329.

This sequence belongs to the EPSP synthase family. MurA subfamily.

It localises to the cytoplasm. It catalyses the reaction phosphoenolpyruvate + UDP-N-acetyl-alpha-D-glucosamine = UDP-N-acetyl-3-O-(1-carboxyvinyl)-alpha-D-glucosamine + phosphate. It participates in cell wall biogenesis; peptidoglycan biosynthesis. Cell wall formation. Adds enolpyruvyl to UDP-N-acetylglucosamine. The polypeptide is UDP-N-acetylglucosamine 1-carboxyvinyltransferase (Shewanella baltica (strain OS195)).